The chain runs to 138 residues: uncharacterized protein (138 aa).

The tract at residues 74 to 96 is disordered; that stretch reads RRRSPSLPARRPPTPREDALEDY. Residues 87 to 96 show a composition bias toward basic and acidic residues; the sequence is TPREDALEDY.

This is an uncharacterized protein from Orgyia pseudotsugata (Douglas-fir tussock moth).